A 565-amino-acid polypeptide reads, in one-letter code: Polyadenylate-binding protein 1-A (565 aa).

4 RRM domains span residues 10 to 88 (SSLY…WSQR), 98 to 175 (GNVF…PFKS), 188 to 265 (TNVF…RAQK), and 284 to 362 (VNLY…LAQR). Residues 435 to 466 (YARGQPRQNGPRQNGGQPRQNGPRPDVSGAQP) are disordered. Residues 440–454 (PRQNGPRQNGGQPRQ) are compositionally biased toward polar residues. The PABC domain maps to 489–565 (SALNLQSIIN…REALEVLGSN (77 aa)).

This sequence belongs to the polyadenylate-binding protein type-1 family.

It localises to the cytoplasm. The protein resides in the nucleus. Binds the poly(A) tail of mRNA. Appears to be an important mediator of the multiple roles of the poly(A) tail in mRNA biogenesis, stability and translation. The sequence is that of Polyadenylate-binding protein 1-A (pabpc1A) from Dictyostelium discoideum (Social amoeba).